Reading from the N-terminus, the 462-residue chain is O-methyltransferase CTB2 (462 aa).

Asp289 contacts S-adenosyl-L-methionine. His340 acts as the Proton acceptor in catalysis.

It belongs to the class I-like SAM-binding methyltransferase superfamily. Cation-independent O-methyltransferase family. COMT subfamily.

The protein operates within mycotoxin biosynthesis. O-methyltransferase; part of the gene cluster that mediates the biosynthesis of cercosporin, a light-activated, non-host-selective toxin. The perylenequinone chromophore of cercosporin absorbs light energy to attain an electronically-activated triplet state and produces active oxygen species such as the hydroxyl radical, superoxide, hydrogen peroxide or singlet oxygen upon reaction with oxygen molecules. These reactive oxygen species cause damage to various cellular components including lipids, proteins and nucleic acids. The first step of cercosporin biosynthesis is performed by the polyketide synthase CTB1 which catalyzes the formation of nor-toralactone. The starter unit acyltransferase (SAT) domain of CTB1 initiates polyketide extension by the selective utilization of acetyl-CoA, which is elongated to the heptaketide in the beta-ketoacyl synthase (KS) domain by successive condensations with six malonyl units introduced by the malonyl acyltransferase (MAT) domain. The product template (PT) domain catalyzes C4-C9 and C2-C11 aldol cyclizations and dehydrations to a trihydroxynaphthalene, which is thought to be delivered to the thioesterase (TE) domain for product release. The bifunctional enzyme CTB3 then methylates nor-toralactone to toralactone before conducting an unusual oxidative aromatic ring opening. The O-methyltransferase CTB2 further methylates the nascent OH-6 of the CBT3 product, blocking further oxidation at this site before the reductase CTB6 reduces the 2-oxopropyl ketone at position C7, giving naphthalene. The FAD-dependent monooxygenase CTB5 in concert with the multicopper oxidase CTB12 are responsible for homodimerization of naphthalene with CTB7 installing the dioxepine moiety, finally producing cercosporin. The fasciclin domain-containing protein CTB11 might act with CTB5 and CTB12 whereas the roles of CTB9 and CTB10 have still to be elucidated. The polypeptide is O-methyltransferase CTB2 (Cercospora beticola (Sugarbeet leaf spot fungus)).